The sequence spans 89 residues: Strongylocin 2 (89 aa).

The first 22 residues, 1–22, serve as a signal peptide directing secretion; that stretch reads MNIRTASFTFIVVMMILSQTMA. A propeptide spanning residues 23–38 is cleaved from the precursor; the sequence is DRFFNEPEEDDHLVES. W39 is modified (6'-bromotryptophan).

Post-translationally, contains 3 disulfide bonds.

In terms of biological role, has antimicrobial activity against Gram-negative bacteria and Gram-positive bacteria with minimum inhibitory concentration (MIC) between 0.78 uM and 3.13 uM. This is Strongylocin 2 from Echinus esculentus (Sea urchin).